We begin with the raw amino-acid sequence, 657 residues long: Glycogen debranching enzyme (657 aa).

D336 (nucleophile) is an active-site residue. Residue E371 is the Proton donor of the active site. The span at 458 to 467 (NEANGEENRD) shows a compositional bias: basic and acidic residues. The disordered stretch occupies residues 458–479 (NEANGEENRDGTNNNYSNNHGK).

Belongs to the glycosyl hydrolase 13 family.

The enzyme catalyses Hydrolysis of (1-&gt;6)-alpha-D-glucosidic linkages to branches with degrees of polymerization of three or four glucose residues in limit dextrin.. It participates in glycan degradation; glycogen degradation. In terms of biological role, removes maltotriose and maltotetraose chains that are attached by 1,6-alpha-linkage to the limit dextrin main chain, generating a debranched limit dextrin. The polypeptide is Glycogen debranching enzyme (Shigella sonnei (strain Ss046)).